A 404-amino-acid polypeptide reads, in one-letter code: Cysteine desulfurase IscS (404 aa).

Residues 75–76 (AT), N155, Q183, and 203–205 (SAH) each bind pyridoxal 5'-phosphate. An N6-(pyridoxal phosphate)lysine modification is found at K206. T243 contributes to the pyridoxal 5'-phosphate binding site. The active-site Cysteine persulfide intermediate is C328. Residue C328 participates in [2Fe-2S] cluster binding.

This sequence belongs to the class-V pyridoxal-phosphate-dependent aminotransferase family. NifS/IscS subfamily. In terms of assembly, homodimer. Forms a heterotetramer with IscU, interacts with other sulfur acceptors. It depends on pyridoxal 5'-phosphate as a cofactor.

The protein localises to the cytoplasm. The catalysed reaction is (sulfur carrier)-H + L-cysteine = (sulfur carrier)-SH + L-alanine. Its pathway is cofactor biosynthesis; iron-sulfur cluster biosynthesis. Master enzyme that delivers sulfur to a number of partners involved in Fe-S cluster assembly, tRNA modification or cofactor biosynthesis. Catalyzes the removal of elemental sulfur atoms from cysteine to produce alanine. Functions as a sulfur delivery protein for Fe-S cluster synthesis onto IscU, an Fe-S scaffold assembly protein, as well as other S acceptor proteins. The sequence is that of Cysteine desulfurase IscS from Colwellia psychrerythraea (strain 34H / ATCC BAA-681) (Vibrio psychroerythus).